The chain runs to 197 residues: Imidazoleglycerol-phosphate dehydratase (197 aa).

Belongs to the imidazoleglycerol-phosphate dehydratase family.

The protein localises to the cytoplasm. It carries out the reaction D-erythro-1-(imidazol-4-yl)glycerol 3-phosphate = 3-(imidazol-4-yl)-2-oxopropyl phosphate + H2O. It participates in amino-acid biosynthesis; L-histidine biosynthesis; L-histidine from 5-phospho-alpha-D-ribose 1-diphosphate: step 6/9. The sequence is that of Imidazoleglycerol-phosphate dehydratase from Nitrobacter hamburgensis (strain DSM 10229 / NCIMB 13809 / X14).